The chain runs to 1338 residues: Centrosomal P4.1-associated protein (1338 aa).

Positions 190–211 (GLSLLPDDQSQKHRSPGNTTTG) are disordered. Ser-260 and Ser-316 each carry phosphoserine. Positions 319–394 (VANIEERPIK…FTNAKSKFQK (76 aa)) are alpha/beta-tubulin binding. Disordered stretches follow at residues 386 to 414 (TNAK…PLFK), 436 to 479 (PILK…QTGK), and 521 to 551 (QGKD…ESES). Over residues 400-409 (LVTNQSTSED) the composition is skewed to polar residues. Ser-540 carries the post-translational modification Phosphoserine. Positions 541–550 (PIRETMKESE) are enriched in basic and acidic residues. At Ser-589 the chain carries Phosphoserine; by PLK2. The residue at position 595 (Ser-595) is a Phosphoserine; by PLK2 and PLK4. Disordered stretches follow at residues 611-789 (HRMS…LSLS), 845-865 (VKRG…TSEL), and 1096-1153 (YLPM…QGEI). Positions 635–650 (NRSEDLDHTAREKESE) are enriched in basic and acidic residues. The segment covering 679-689 (QKSTSENQTEW) has biased composition (polar residues). Residues 717–764 (STEDRERGISSREDSPQVCDDKGPFKDTRTQEDKRRDVDLDLSDKDYS) show a composition bias toward basic and acidic residues. Ser-759 is subject to Phosphoserine. Residues 895–1338 (QPPGDNARSQ…EGNVLMDTEL (444 aa)) form an interaction with STIL region. The segment covering 1140–1149 (YKEEEEDQDI) has biased composition (acidic residues).

The protein belongs to the TCP10 family. Forms homodimers. Associates with microtubules plus ends; binds to beta-tubulin subunits exposed on microtubule outer surface at its distal tip; also associates with microtubule lattice. Associated with the gamma-tubulin complex. Interacts with the head domain of EPB41. Interacts with LYST. Interacts with CEP152 (via C-terminus). Interacts with STIL. Forms a complex with STIL and SASS6. In terms of processing, phosphorylation at Ser-589 and Ser-595 by PLK2 is required for procentriole formation and centriole elongation. Phosphorylation by PLK2 oscillates during the cell cycle: it increases at G1/S transition and decreases during the exit from mitosis. Phosphorylation at Ser-595 is also mediated by PLK4 but is not a critical step in PLK4 function in procentriole assembly.

It is found in the cytoplasm. The protein resides in the cytoskeleton. It localises to the microtubule organizing center. The protein localises to the centrosome. Its subcellular location is the centriole. Its function is as follows. Plays an important role in cell division and centrosome function by participating in centriole duplication. Inhibits microtubule nucleation from the centrosome. Involved in the regulation of slow processive growth of centriolar microtubules. Acts as a microtubule plus-end tracking protein that stabilizes centriolar microtubules and inhibits microtubule polymerization and extension from the distal ends of centrioles. Required for centriole elongation and for STIL-mediated centriole amplification. Required for the recruitment of CEP295 to the proximal end of new-born centrioles at the centriolar microtubule wall during early S phase in a PLK4-dependent manner. May be involved in the control of centriolar-microtubule growth by acting as a regulator of tubulin release. The polypeptide is Centrosomal P4.1-associated protein (Homo sapiens (Human)).